A 239-amino-acid chain; its full sequence is Phosphoribosylaminoimidazole-succinocarboxamide synthase (239 aa).

It belongs to the SAICAR synthetase family.

The catalysed reaction is 5-amino-1-(5-phospho-D-ribosyl)imidazole-4-carboxylate + L-aspartate + ATP = (2S)-2-[5-amino-1-(5-phospho-beta-D-ribosyl)imidazole-4-carboxamido]succinate + ADP + phosphate + 2 H(+). Its pathway is purine metabolism; IMP biosynthesis via de novo pathway; 5-amino-1-(5-phospho-D-ribosyl)imidazole-4-carboxamide from 5-amino-1-(5-phospho-D-ribosyl)imidazole-4-carboxylate: step 1/2. This is Phosphoribosylaminoimidazole-succinocarboxamide synthase from Bacillus mycoides (strain KBAB4) (Bacillus weihenstephanensis).